The following is a 268-amino-acid chain: Phosphate import ATP-binding protein PstB 3 (268 aa).

The ABC transporter domain maps to Leu15 to Pro254. Position 47–54 (Gly47–Ser54) interacts with ATP.

The protein belongs to the ABC transporter superfamily. Phosphate importer (TC 3.A.1.7) family. As to quaternary structure, the complex is composed of two ATP-binding proteins (PstB), two transmembrane proteins (PstC and PstA) and a solute-binding protein (PstS).

It localises to the cell inner membrane. It catalyses the reaction phosphate(out) + ATP + H2O = ADP + 2 phosphate(in) + H(+). Functionally, part of the ABC transporter complex PstSACB involved in phosphate import. Responsible for energy coupling to the transport system. This chain is Phosphate import ATP-binding protein PstB 3, found in Nostoc sp. (strain PCC 7120 / SAG 25.82 / UTEX 2576).